Consider the following 560-residue polypeptide: Clathrin interactor EPSIN 1 (560 aa).

Positions 20–152 constitute an ENTH domain; it reads LKVLKVPEME…NNKEKISEIR (133 aa). The interval 190–288 is disordered; the sequence is NFDSYKDRDS…KPSTGSANQV (99 aa). Over residues 193–220 the composition is skewed to basic and acidic residues; that stretch reads SYKDRDSREDKNDYESFQKSRRGVKTEE. Residues 221-233 are compositionally biased toward polar residues; sequence QSYTSKKSFSRYG. Over residues 234–251 the composition is skewed to basic and acidic residues; the sequence is STDHDNLSSGKKSPDSAK. Polar residues predominate over residues 274 to 287; it reads GTSSNKPSTGSANQ. The Clathrin binding signature appears at 296–300; it reads IGDFL. The short motif at 320–322 is the ALPHA-ADR binding element; that stretch reads DLF. Residues 414-439 are compositionally biased toward polar residues; it reads SHSASVSTGPQAPSVHGSATNTTSPL. 2 disordered regions span residues 414–453 and 517–560; these read SHSA…QKKD and LGKT…GFKQ. The segment covering 526–536 has biased composition (low complexity); sequence QQQQQQQQQQQ. The segment covering 544–554 has biased composition (polar residues); that stretch reads FFSSLSNQRYQ.

The protein belongs to the epsin family. As to quaternary structure, interacts with clathrin, VTI11, GAMMA-ADR and VSR1. Binds to the deubiquitinating enzyme AMSH3. In terms of tissue distribution, mostly expressed in cotyledons and flowers, and, to a lower extent, in roots, leaves and siliques (at protein level).

The protein resides in the golgi apparatus. It is found in the prevacuolar compartment. It localises to the cytoplasm. Its subcellular location is the cytoplasmic vesicle. The protein localises to the clathrin-coated vesicle. The protein resides in the cytoskeleton. May have a role in transport via clathrin-coated vesicles from the trans-Golgi network to endosomes. Stimulates clathrin assembly. Does not seem to bind to phospholipids. Plays an important role in the vacuolar trafficking of soluble cargo proteins at the trans-Golgi network. The sequence is that of Clathrin interactor EPSIN 1 (EPSIN1) from Arabidopsis thaliana (Mouse-ear cress).